The following is a 339-amino-acid chain: DNA-directed RNA polymerase subunit alpha (339 aa).

Residues 1–233 (MVREEITGST…DLFLPFLHTE (233 aa)) form an alpha N-terminal domain (alpha-NTD) region. The alpha C-terminal domain (alpha-CTD) stretch occupies residues 264-339 (KKGIPLNCIF…IDLPKNKFSL (76 aa)).

It belongs to the RNA polymerase alpha chain family. As to quaternary structure, in plastids the minimal PEP RNA polymerase catalytic core is composed of four subunits: alpha, beta, beta', and beta''. When a (nuclear-encoded) sigma factor is associated with the core the holoenzyme is formed, which can initiate transcription.

It localises to the plastid. The protein resides in the chloroplast. It catalyses the reaction RNA(n) + a ribonucleoside 5'-triphosphate = RNA(n+1) + diphosphate. Functionally, DNA-dependent RNA polymerase catalyzes the transcription of DNA into RNA using the four ribonucleoside triphosphates as substrates. The polypeptide is DNA-directed RNA polymerase subunit alpha (Zea mays (Maize)).